A 266-amino-acid polypeptide reads, in one-letter code: Hydroxyethylthiazole kinase (266 aa).

Met-46 is a binding site for substrate. Arg-122 and Ser-168 together coordinate ATP. Gly-195 provides a ligand contact to substrate.

The protein belongs to the Thz kinase family. Requires Mg(2+) as cofactor.

It catalyses the reaction 5-(2-hydroxyethyl)-4-methylthiazole + ATP = 4-methyl-5-(2-phosphooxyethyl)-thiazole + ADP + H(+). Its pathway is cofactor biosynthesis; thiamine diphosphate biosynthesis; 4-methyl-5-(2-phosphoethyl)-thiazole from 5-(2-hydroxyethyl)-4-methylthiazole: step 1/1. In terms of biological role, catalyzes the phosphorylation of the hydroxyl group of 4-methyl-5-beta-hydroxyethylthiazole (THZ). In Oleidesulfovibrio alaskensis (strain ATCC BAA-1058 / DSM 17464 / G20) (Desulfovibrio alaskensis), this protein is Hydroxyethylthiazole kinase.